The following is a 158-amino-acid chain: 2-C-methyl-D-erythritol 2,4-cyclodiphosphate synthase (158 aa).

2 residues coordinate a divalent metal cation: D9 and H11. 4-CDP-2-C-methyl-D-erythritol 2-phosphate is bound by residues 9 to 11 and 35 to 36; these read DVH and HS. H43 contributes to the a divalent metal cation binding site. 4-CDP-2-C-methyl-D-erythritol 2-phosphate contacts are provided by residues 57 to 59, 62 to 66, 133 to 136, F140, and R143; these read DIG, FPDTD, and TTTE.

This sequence belongs to the IspF family. In terms of assembly, homotrimer. A divalent metal cation serves as cofactor.

It carries out the reaction 4-CDP-2-C-methyl-D-erythritol 2-phosphate = 2-C-methyl-D-erythritol 2,4-cyclic diphosphate + CMP. Its pathway is isoprenoid biosynthesis; isopentenyl diphosphate biosynthesis via DXP pathway; isopentenyl diphosphate from 1-deoxy-D-xylulose 5-phosphate: step 4/6. Its function is as follows. Involved in the biosynthesis of isopentenyl diphosphate (IPP) and dimethylallyl diphosphate (DMAPP), two major building blocks of isoprenoid compounds. Catalyzes the conversion of 4-diphosphocytidyl-2-C-methyl-D-erythritol 2-phosphate (CDP-ME2P) to 2-C-methyl-D-erythritol 2,4-cyclodiphosphate (ME-CPP) with a corresponding release of cytidine 5-monophosphate (CMP). This Actinobacillus pleuropneumoniae serotype 7 (strain AP76) protein is 2-C-methyl-D-erythritol 2,4-cyclodiphosphate synthase.